Reading from the N-terminus, the 127-residue chain is Translation initiation factor 5A (127 aa).

At Lys-35 the chain carries Hypusine.

The protein belongs to the eIF-5A family.

It localises to the cytoplasm. Functionally, functions by promoting the formation of the first peptide bond. The protein is Translation initiation factor 5A of Methanospirillum hungatei JF-1 (strain ATCC 27890 / DSM 864 / NBRC 100397 / JF-1).